We begin with the raw amino-acid sequence, 277 residues long: Protein OPG166 (277 aa).

N-linked (GlcNAc...) asparagine; by host glycosylation is found at Asn29 and Asn58. 5 helical membrane-spanning segments follow: residues Thr124–Tyr144, Gly156–Phe176, Ile186–Ser206, Leu219–Leu239, and Leu247–Val267.

Belongs to the orthopoxvirus OPG166 protein family.

Its subcellular location is the host membrane. Its function is as follows. Promotes, when overexpressed, the influx of extracellular Ca(2+), leading to membrane permeability and host cell necrosis. The chain is Protein OPG166 (OPG166) from Vaccinia virus (strain Copenhagen) (VACV).